The sequence spans 213 residues: ATP-dependent Clp protease proteolytic subunit (213 aa).

Catalysis depends on Ser-114, which acts as the Nucleophile. Residue His-139 is part of the active site.

This sequence belongs to the peptidase S14 family. In terms of assembly, fourteen ClpP subunits assemble into 2 heptameric rings which stack back to back to give a disk-like structure with a central cavity, resembling the structure of eukaryotic proteasomes.

It is found in the cytoplasm. The catalysed reaction is Hydrolysis of proteins to small peptides in the presence of ATP and magnesium. alpha-casein is the usual test substrate. In the absence of ATP, only oligopeptides shorter than five residues are hydrolyzed (such as succinyl-Leu-Tyr-|-NHMec, and Leu-Tyr-Leu-|-Tyr-Trp, in which cleavage of the -Tyr-|-Leu- and -Tyr-|-Trp bonds also occurs).. Cleaves peptides in various proteins in a process that requires ATP hydrolysis. Has a chymotrypsin-like activity. Plays a major role in the degradation of misfolded proteins. The protein is ATP-dependent Clp protease proteolytic subunit of Pseudomonas putida (strain ATCC 47054 / DSM 6125 / CFBP 8728 / NCIMB 11950 / KT2440).